Reading from the N-terminus, the 1068-residue chain is Tricorn protease homolog (1068 aa).

The segment at 61-326 (MKAYYMYPDI…DSLTKLDINL (266 aa)) is six-bladed beta propeller. Residues 338–686 (VNVMEYMNEA…RKGGVIDLSR (349 aa)) form a seven-bladed beta propeller region. A C-1 region spans residues 692 to 762 (EPEKEWRQML…RTSHSYETAY (71 aa)). His756 acts as the Charge relay system in catalysis. Residues 771–864 (SVGGLGAEFE…RVTVKVLKDE (94 aa)) are PDZ-like. The segment at 865-1068 (RFLIYRYWVE…TAIELALKQL (204 aa)) is C-2. Gly927 contributes to the substrate binding site. Ser974 acts as the Nucleophile in catalysis. Glu1032 (charge relay system) is an active-site residue.

It belongs to the peptidase S41B family.

The protein resides in the cytoplasm. Functionally, degrades oligopeptides in a sequential manner. This is Tricorn protease homolog (tri) from Saccharolobus solfataricus (strain ATCC 35092 / DSM 1617 / JCM 11322 / P2) (Sulfolobus solfataricus).